The following is a 317-amino-acid chain: Beta-ketoacyl-[acyl-carrier-protein] synthase III (317 aa).

Active-site residues include Cys112 and His244. The tract at residues 245 to 249 (QANLR) is ACP-binding. Asn274 is an active-site residue.

The protein belongs to the thiolase-like superfamily. FabH family. As to quaternary structure, homodimer.

It is found in the cytoplasm. The catalysed reaction is malonyl-[ACP] + acetyl-CoA + H(+) = 3-oxobutanoyl-[ACP] + CO2 + CoA. Its pathway is lipid metabolism; fatty acid biosynthesis. Catalyzes the condensation reaction of fatty acid synthesis by the addition to an acyl acceptor of two carbons from malonyl-ACP. Catalyzes the first condensation reaction which initiates fatty acid synthesis and may therefore play a role in governing the total rate of fatty acid production. Possesses both acetoacetyl-ACP synthase and acetyl transacylase activities. Its substrate specificity determines the biosynthesis of branched-chain and/or straight-chain of fatty acids. In Pectobacterium atrosepticum (strain SCRI 1043 / ATCC BAA-672) (Erwinia carotovora subsp. atroseptica), this protein is Beta-ketoacyl-[acyl-carrier-protein] synthase III.